Reading from the N-terminus, the 74-residue chain is U-actitoxin-Bgr3a (74 aa).

A signal peptide spans 1-21 (MSAQRFLFLLVVTSLIAASLA). A propeptide spanning residues 22–29 (APKDVQLT) is cleaved from the precursor. 3 disulfide bridges follow: cysteine 35–cysteine 68, cysteine 37–cysteine 61, and cysteine 51–cysteine 69.

The protein belongs to the sea anemone type 3 (BDS) potassium channel toxin family.

It is found in the secreted. Its subcellular location is the nematocyst. Its function is as follows. Potently and selectively inhibits voltage-gated potassium channels Kv11/KCNH/ERG. Acts as a gating-modifier toxin that shifts the voltage-dependence of ERG activation in the positive direction and suppresses its current amplitudes elicited by strong depolarizing pulses that maximally activate the channels. The chain is U-actitoxin-Bgr3a from Bunodosoma granuliferum (Red warty sea anemone).